A 176-amino-acid polypeptide reads, in one-letter code: Disulfide bond formation protein B (176 aa).

Over 1–14 (MMRSLNRCSKHRAA) the chain is Cytoplasmic. Residues 15–31 (WLLLALTTFSLELVALY) form a helical membrane-spanning segment. Residues 32–49 (FQHVMLLKPCVLCVYQRC) lie on the Periplasmic side of the membrane. C41 and C44 are oxidised to a cystine. Residues 50–65 (ALYGVVAAGLVGAIAP) form a helical membrane-spanning segment. Residues 66 to 71 (ATPLRF) are Cytoplasmic-facing. The chain crosses the membrane as a helical span at residues 72 to 89 (SGLAIWLYSAWEGLQLAM). Residues 90 to 144 (KHTDIQLHPSPFVTCDFFVSFPAWLPLDKWLPSVFSASGDCAVRQWHFLSLEMPQ) are Periplasmic-facing. A disulfide bridge connects residues C104 and C130. Residues 145-163 (WMIVIFGAYLAVAVLILLA) traverse the membrane as a helical segment. The Cytoplasmic segment spans residues 164 to 176 (QFFPPRKRDLFSR).

Belongs to the DsbB family.

The protein resides in the cell inner membrane. Required for disulfide bond formation in some periplasmic proteins. Acts by oxidizing the DsbA protein. The sequence is that of Disulfide bond formation protein B from Sodalis glossinidius (strain morsitans).